We begin with the raw amino-acid sequence, 196 residues long: Dephospho-CoA kinase (196 aa).

One can recognise a DPCK domain in the interval 6–196; the sequence is AIALTGGIGT…QVERFLKTLL (191 aa). ATP is bound at residue 14–19; that stretch reads GTGKST.

Belongs to the CoaE family.

The protein resides in the cytoplasm. The catalysed reaction is 3'-dephospho-CoA + ATP = ADP + CoA + H(+). It functions in the pathway cofactor biosynthesis; coenzyme A biosynthesis; CoA from (R)-pantothenate: step 5/5. Functionally, catalyzes the phosphorylation of the 3'-hydroxyl group of dephosphocoenzyme A to form coenzyme A. This Helicobacter pylori (strain ATCC 700392 / 26695) (Campylobacter pylori) protein is Dephospho-CoA kinase.